The following is a 1054-amino-acid chain: Filament-like plant protein 6 (1054 aa).

Coiled coils occupy residues 64–139 (VQIK…VKQH), 174–200 (AEDR…KDHE), and 250–341 (SNML…RKKL). Disordered regions lie at residues 359–390 (RDSG…GSEF) and 448–506 (EAQL…KEKD). Low complexity-rich tracts occupy residues 371–380 (VKVSSPCKSP), 450–461 (QLQQNNSQKSSL), and 470–494 (SNPS…GSLS). Residues 389-463 (EFSLDNAQKF…NNSQKSSLEV (75 aa)) are a coiled coil. Coiled coils occupy residues 637-666 (QNLV…RIHD) and 788-944 (ESDS…IFVL). The interval 951–1054 (FRPQPEQMRS…SRFFSSKSGY (104 aa)) is disordered. The segment covering 1007 to 1032 (PSDSETSDTTTSPSRVGSRLSRSGSS) has biased composition (low complexity).

The protein belongs to the FPP family. In terms of assembly, interacts with WPP/MAF proteins.

This Arabidopsis thaliana (Mouse-ear cress) protein is Filament-like plant protein 6 (FPP6).